Here is a 179-residue protein sequence, read N- to C-terminus: Tetratricopeptide repeat protein 36 (179 aa).

TPR repeat units follow at residues 43–76 (SLQLEREGVALAEGVRLDEAIEKFTKALEVCPKN), 78–110 (SAYNNRAQAYRLQNKPEKALDDLNEALSLAGPK), and 115–148 (CQAYVQRASIYRLRGDDDKARTDFASAAELGSSF).

The protein belongs to the TTC36 family.

This Caenorhabditis elegans protein is Tetratricopeptide repeat protein 36.